Reading from the N-terminus, the 308-residue chain is Probable manganese-dependent inorganic pyrophosphatase (308 aa).

Mn(2+) contacts are provided by His-9, Asp-13, Asp-15, Asp-75, His-97, and Asp-149.

Belongs to the PPase class C family. Requires Mn(2+) as cofactor.

Its subcellular location is the cytoplasm. The catalysed reaction is diphosphate + H2O = 2 phosphate + H(+). In Listeria monocytogenes serotype 4a (strain HCC23), this protein is Probable manganese-dependent inorganic pyrophosphatase.